A 910-amino-acid polypeptide reads, in one-letter code: Protein translocase subunit SecA (910 aa).

Residues glutamine 87, 105-109, and aspartate 501 contribute to the ATP site; that span reads GEGKT. Positions 894, 896, 905, and 906 each coordinate Zn(2+).

Belongs to the SecA family. Monomer and homodimer. Part of the essential Sec protein translocation apparatus which comprises SecA, SecYEG and auxiliary proteins SecDF-YajC and YidC. Zn(2+) is required as a cofactor.

The protein localises to the cell inner membrane. It localises to the cytoplasm. It carries out the reaction ATP + H2O + cellular proteinSide 1 = ADP + phosphate + cellular proteinSide 2.. Its function is as follows. Part of the Sec protein translocase complex. Interacts with the SecYEG preprotein conducting channel. Has a central role in coupling the hydrolysis of ATP to the transfer of proteins into and across the cell membrane, serving both as a receptor for the preprotein-SecB complex and as an ATP-driven molecular motor driving the stepwise translocation of polypeptide chains across the membrane. In Acidiphilium cryptum (strain JF-5), this protein is Protein translocase subunit SecA.